Consider the following 420-residue polypeptide: Diaminobutyrate--2-oxoglutarate transaminase (420 aa).

Lys271 is modified (N6-(pyridoxal phosphate)lysine).

Belongs to the class-III pyridoxal-phosphate-dependent aminotransferase family. Pyridoxal 5'-phosphate serves as cofactor.

The catalysed reaction is L-2,4-diaminobutanoate + 2-oxoglutarate = L-aspartate 4-semialdehyde + L-glutamate. It functions in the pathway amine and polyamine biosynthesis; ectoine biosynthesis; L-ectoine from L-aspartate 4-semialdehyde: step 1/3. Catalyzes reversively the conversion of L-aspartate beta-semialdehyde (ASA) to L-2,4-diaminobutyrate (DABA) by transamination with L-glutamate. In Streptomyces anulatus (Streptomyces chrysomallus), this protein is Diaminobutyrate--2-oxoglutarate transaminase (ectB).